We begin with the raw amino-acid sequence, 87 residues long: uncharacterized protein (87 aa).

It to H.pylori HP0495/JHP0447.

This is an uncharacterized protein from Campylobacter jejuni subsp. jejuni serotype O:2 (strain ATCC 700819 / NCTC 11168).